The chain runs to 413 residues: Tryptophan synthase beta chain 2 (413 aa).

K107 bears the N6-(pyridoxal phosphate)lysine mark.

The protein belongs to the TrpB family. Tetramer of two alpha and two beta chains. It depends on pyridoxal 5'-phosphate as a cofactor.

It catalyses the reaction (1S,2R)-1-C-(indol-3-yl)glycerol 3-phosphate + L-serine = D-glyceraldehyde 3-phosphate + L-tryptophan + H2O. Its pathway is amino-acid biosynthesis; L-tryptophan biosynthesis; L-tryptophan from chorismate: step 5/5. In terms of biological role, the beta subunit is responsible for the synthesis of L-tryptophan from indole and L-serine. The polypeptide is Tryptophan synthase beta chain 2 (trpB2) (Nostoc sp. (strain PCC 7120 / SAG 25.82 / UTEX 2576)).